We begin with the raw amino-acid sequence, 61 residues long: uncharacterized protein (61 aa).

Transmembrane regions (helical) follow at residues 7 to 24 (FNVF…YKLF) and 29 to 48 (VSTT…IVGL).

The protein localises to the cell membrane. This is an uncharacterized protein from Bacillus subtilis (strain 168).